We begin with the raw amino-acid sequence, 335 residues long: Cobalt-precorrin-5B C(1)-methyltransferase (335 aa).

Belongs to the CbiD family.

It carries out the reaction Co-precorrin-5B + S-adenosyl-L-methionine = Co-precorrin-6A + S-adenosyl-L-homocysteine. Its pathway is cofactor biosynthesis; adenosylcobalamin biosynthesis; cob(II)yrinate a,c-diamide from sirohydrochlorin (anaerobic route): step 6/10. In terms of biological role, catalyzes the methylation of C-1 in cobalt-precorrin-5B to form cobalt-precorrin-6A. The sequence is that of Cobalt-precorrin-5B C(1)-methyltransferase from Methanospirillum hungatei JF-1 (strain ATCC 27890 / DSM 864 / NBRC 100397 / JF-1).